Reading from the N-terminus, the 111-residue chain is Small ubiquitin-related modifier 3 (111 aa).

One can recognise a Ubiquitin-like domain in the interval 16–93 (AHVILKVKSQ…IDACRAMSGG (78 aa)). Residue G93 forms a Glycyl lysine isopeptide (Gly-Lys) (interchain with K-? in acceptor proteins) linkage.

It belongs to the ubiquitin family. SUMO subfamily. Interacts with SAE2, SCE1, SIZ1 and MMS21. Covalently attached to a number of proteins. Interacts with NPR1; this interaction promotes NPR1 phosphorylation and triggers its sumoylation and subsequent degradation.

It is found in the nucleus. The protein localises to the cytoplasm. In terms of biological role, ubiquitin-like protein which can be covalently attached to target lysines as a monomer. Does not seem to be involved in protein degradation and may function as an antagonist of ubiquitin in the degradation process. Promotes NPR1 sumoylation to activate defense gene expression and regulate its degradation. In Arabidopsis thaliana (Mouse-ear cress), this protein is Small ubiquitin-related modifier 3.